Reading from the N-terminus, the 419-residue chain is UDP-N-acetylglucosamine 1-carboxyvinyltransferase (419 aa).

22 to 23 (KN) contacts phosphoenolpyruvate. R93 lines the UDP-N-acetyl-alpha-D-glucosamine pocket. Catalysis depends on C117, which acts as the Proton donor. C117 carries the post-translational modification 2-(S-cysteinyl)pyruvic acid O-phosphothioketal. The UDP-N-acetyl-alpha-D-glucosamine site is built by D307 and I329.

This sequence belongs to the EPSP synthase family. MurA subfamily.

The protein resides in the cytoplasm. It carries out the reaction phosphoenolpyruvate + UDP-N-acetyl-alpha-D-glucosamine = UDP-N-acetyl-3-O-(1-carboxyvinyl)-alpha-D-glucosamine + phosphate. The protein operates within cell wall biogenesis; peptidoglycan biosynthesis. Its function is as follows. Cell wall formation. Adds enolpyruvyl to UDP-N-acetylglucosamine. The sequence is that of UDP-N-acetylglucosamine 1-carboxyvinyltransferase from Shewanella woodyi (strain ATCC 51908 / MS32).